Reading from the N-terminus, the 633-residue chain is Bifunctional enzyme CysN/CysC (633 aa).

The segment at M1–Q463 is sulfate adenylyltransferase. Residues K22–L241 enclose the tr-type G domain. A G1 region spans residues G31–S38. G31–S38 lines the GTP pocket. The interval G89 to D93 is G2. A G3 region spans residues D110 to G113. GTP is bound by residues D110 to H114 and N165 to D168. Residues N165–D168 are G4. The tract at residues S204–L206 is G5. Residues Q464–I633 are adenylyl-sulfate kinase. G472 to S479 contacts ATP.

This sequence in the C-terminal section; belongs to the APS kinase family. In the N-terminal section; belongs to the TRAFAC class translation factor GTPase superfamily. Classic translation factor GTPase family. CysN/NodQ subfamily. In terms of assembly, heterodimer composed of CysD, the smaller subunit, and CysNC.

The enzyme catalyses sulfate + ATP + H(+) = adenosine 5'-phosphosulfate + diphosphate. It carries out the reaction adenosine 5'-phosphosulfate + ATP = 3'-phosphoadenylyl sulfate + ADP + H(+). It participates in sulfur metabolism; hydrogen sulfide biosynthesis; sulfite from sulfate: step 1/3. Its pathway is sulfur metabolism; hydrogen sulfide biosynthesis; sulfite from sulfate: step 2/3. Functionally, with CysD forms the ATP sulfurylase (ATPS) that catalyzes the adenylation of sulfate producing adenosine 5'-phosphosulfate (APS) and diphosphate, the first enzymatic step in sulfur assimilation pathway. APS synthesis involves the formation of a high-energy phosphoric-sulfuric acid anhydride bond driven by GTP hydrolysis by CysN coupled to ATP hydrolysis by CysD. In terms of biological role, APS kinase catalyzes the synthesis of activated sulfate. The sequence is that of Bifunctional enzyme CysN/CysC (cysNC) from Pseudomonas aeruginosa (strain ATCC 15692 / DSM 22644 / CIP 104116 / JCM 14847 / LMG 12228 / 1C / PRS 101 / PAO1).